The chain runs to 78 residues: Conotoxin 6 (78 aa).

An N-terminal signal peptide occupies residues 1–22 (MKLTCMMIVAVLFLTAWIFITA). Positions 23–51 (DNSRNGIENLPRMRRHEMKNPKASKLNKR) are excised as a propeptide. Intrachain disulfides connect Cys53-Cys69, Cys60-Cys73, and Cys68-Cys77.

This sequence belongs to the conotoxin O1 superfamily. In terms of tissue distribution, expressed by the venom duct.

It localises to the secreted. The chain is Conotoxin 6 from Conus imperialis (Imperial cone).